Here is an 833-residue protein sequence, read N- to C-terminus: Leucine--tRNA ligase (833 aa).

The 'HIGH' region signature appears at Pro41–His52. Residues Lys610–Ser614 carry the 'KMSKS' region motif. Lys613 lines the ATP pocket.

It belongs to the class-I aminoacyl-tRNA synthetase family.

It is found in the cytoplasm. It carries out the reaction tRNA(Leu) + L-leucine + ATP = L-leucyl-tRNA(Leu) + AMP + diphosphate. The chain is Leucine--tRNA ligase from Streptococcus pyogenes serotype M18 (strain MGAS8232).